Consider the following 543-residue polypeptide: MPNPKNSKGGRKNKRANSSGDEQENGAGALAAAGAAGAAAGGALAAAAGCGAAAAGAPGAGGAAGAGGAGTGAANAAAAAGAAAAGDAKNEAPCATPLICSFGRPVDLEKDDYQKVVCNNEHCPCSTWMHLQCFYEWESSILVQFNCIGRARSWNEKQCRQNMWTKKGYDLAFRFCSCRCGQGHLKKDTDWYQVKRMQDEKKKKSGSEKNTGRPPGEAAEEAKKCRPPNKPQKGPSHDLPRRHSMDRQNSQEKAVGAAAYGARSPGGSPGQSPPTGYSILSPAHFSGPRSSRYLGEFLKNAIHLEPHKKAMAGGHVFRNAHFDYSPAGLAVHRGGHFDTPVQFLRRLDLSELLTHIPRHKLNTFHVRMEDDAQVGQGEDLRKFILAALSASHRNVVNCALCHRALPVFEQFPLVDGTLFLSPSRHDEIEYDVPCHLQGRLMHLYAVCVDCLEGVHKIICIKCKSRWDGSWHQLGTMYTYDILAASPCCQARLNCKHCGKPVIDVRIGMQYFSEYSNVQQCPHCGNLDYHFVKPFSSFKVLEAY.

Disordered regions lie at residues 1-26 and 197-283; these read MPNP…QENG and MQDE…LSPA. Basic and acidic residues-rich tracts occupy residues 197–211 and 235–250; these read MQDE…EKNT and PSHD…RQNS. Residues serine 264 and serine 268 each carry the phosphoserine modification.

As to expression, expressed in all tissues examined. Highest levels are in the spleen, thymus, peripheral blood and heart. Lowest in the kidney and pancreas.

Functionally, may play an important role in some human cancers. May be part of the regulatory mechanism in the development of epithelial tube networks such as the circulatory system and lungs. The sequence is that of Headcase protein homolog (HECA) from Homo sapiens (Human).